The following is a 138-amino-acid chain: Phosphoribosyl-AMP cyclohydrolase (138 aa).

Position 92 (Asp92) interacts with Mg(2+). A Zn(2+)-binding site is contributed by Cys93. Positions 94 and 96 each coordinate Mg(2+). Cys109 and Cys116 together coordinate Zn(2+).

Belongs to the PRA-CH family. As to quaternary structure, homodimer. Mg(2+) serves as cofactor. It depends on Zn(2+) as a cofactor.

The protein resides in the cytoplasm. It carries out the reaction 1-(5-phospho-beta-D-ribosyl)-5'-AMP + H2O = 1-(5-phospho-beta-D-ribosyl)-5-[(5-phospho-beta-D-ribosylamino)methylideneamino]imidazole-4-carboxamide. It functions in the pathway amino-acid biosynthesis; L-histidine biosynthesis; L-histidine from 5-phospho-alpha-D-ribose 1-diphosphate: step 3/9. Catalyzes the hydrolysis of the adenine ring of phosphoribosyl-AMP. This chain is Phosphoribosyl-AMP cyclohydrolase, found in Clavibacter sepedonicus (Clavibacter michiganensis subsp. sepedonicus).